Consider the following 244-residue polypeptide: Glycoprotein 3 (244 aa).

Functionally, although P4 acquires its capsid proteins from helper phages such as P2, it possesses the ability to assemble capsids that are only one-third the size of the helper's capsid. The sid protein is responsible for the assembly of P4-sized shells. It forms a P4-specific scaffold with icosahedral symmetry on the outside of the procapsid-like particles. In Enterobacteria phage P4 (Bacteriophage P4), this protein is Glycoprotein 3 (sid).